The sequence spans 375 residues: B3 domain-containing protein REM-like 2 (375 aa).

3 consecutive DNA-binding regions (TF-B3) follow at residues 51 to 147, 131 to 226, and 277 to 375; these read SFVA…KRLY, FVTV…YGTN, and RLVI…KSGK.

It localises to the nucleus. The polypeptide is B3 domain-containing protein REM-like 2 (Arabidopsis thaliana (Mouse-ear cress)).